The chain runs to 298 residues: MQSIDLYSYLYSLLGQIPEGMVTTYGDLAVALGDVKAARACGYMLSRNNDTENIPCYKVIMSDGSLGGYSLGIDEKIRRLRNDGIEINNGRIDLKRYRFNNFDSSYPLKRLQEEQEKIAGLAVYSDDYNEDKICAIDVSYKDEIGYSVMVSFENNEYDFKTFIKETRFPYIPGYLAYREFPYIKELGKNFDGTMIIDANGLLHPRRCGLATYVGVIMNKPSIGVAKSLLTGSIKNGYVYYNNMPLGYMINSRTIVSPGNRISLESSINFIRNLGKDHYPEILKIAHDRTVALRRNNII.

The probable methylated-DNA--protein-cysteine methyltransferase stretch occupies residues 1-79; that stretch reads MQSIDLYSYL…SLGIDEKIRR (79 aa). Residue cysteine 56 is part of the active site. An endonuclease V region spans residues 80–298; sequence LRNDGIEINN…TVALRRNNII (219 aa). Residues aspartate 137 and aspartate 197 each contribute to the Mg(2+) site.

In the N-terminal section; belongs to the MGMT family. It in the C-terminal section; belongs to the endonuclease V family. Mg(2+) serves as cofactor.

The protein localises to the cytoplasm. The catalysed reaction is Endonucleolytic cleavage at apurinic or apyrimidinic sites to products with a 5'-phosphate.. Its function is as follows. DNA repair enzyme involved in the repair of deaminated bases. Selectively cleaves double-stranded DNA at the second phosphodiester bond 3' to a deoxyinosine leaving behind the intact lesion on the nicked DNA. This chain is Bifunctional methyltransferase/endonuclease, found in Picrophilus torridus (strain ATCC 700027 / DSM 9790 / JCM 10055 / NBRC 100828 / KAW 2/3).